Reading from the N-terminus, the 354-residue chain is Envelope glycoprotein I (354 aa).

A signal peptide spans 1-20 (MFLIQCLISAVIFYIQVTNA). Topologically, residues 21-274 (LIFKGDHVSL…SLNDPPENLL (254 aa)) are virion surface. Residues Asn33, Asn47, Asn67, and Asn116 are each glycosylated (N-linked (GlcNAc...) asparagine; by host). A helical membrane pass occupies residues 275 to 295 (IIIPIVASVMILTAMVIVIVI). At 296 to 354 (SVKRRRIKKHPIYRPNTKTRRGIQNATPESDVMLEAAIAQLATIREESPPHSVVNPFVK) the chain is on the intravirion side. At Ser343 the chain carries Phosphoserine.

Belongs to the alphaherpesvirinae glycoprotein I family. In terms of assembly, interacts with gE; this interaction enhances the Fc receptor function of gE.

It is found in the virion membrane. The protein resides in the host cell membrane. Its subcellular location is the host cell junction. It localises to the host Golgi apparatus membrane. In terms of biological role, in epithelial cells, the heterodimer gE/gI is required for the cell-to-cell spread of the virus, by sorting nascent virions to cell junctions. Once the virus reaches the cell junctions, virus particles can spread to adjacent cells extremely rapidly through interactions with cellular receptors that accumulate at these junctions. Implicated in basolateral spread in polarized cells. In neuronal cells, gE/gI is essential for the anterograde spread of the infection throughout the host nervous system. Together with US9, the heterodimer gE/gI is involved in the sorting and transport of viral structural components toward axon tips. The heterodimer gE/gI serves as a receptor for the Fc part of human IgG. Dissociation of gE/gI from IgG occurs at acidic pH. May thus be involved in anti-VZV antibodies bipolar bridging, followed by intracellular endocytosis and degradation, thereby interfering with host Ig-mediated immune responses. This is Envelope glycoprotein I (gI) from Homo sapiens (Human).